A 1715-amino-acid polypeptide reads, in one-letter code: Protein PHYLLO, chloroplastic (1715 aa).

A chloroplast-targeting transit peptide spans 1–19 (MRSSFLVSNPPFLPSLIPR). Residues 20 to 273 (YSSRKSIRRS…EKSIFQVSSH (254 aa)) form an inactive isochorismate synthase region. Residues 363–933 (NAVWASAIIE…GTKSELEDAL (571 aa)) are 2-succinyl-5-enolpyruvyl-6-hydroxy-3-cyclohexene-1-carboxylate synthase. A helical membrane pass occupies residues 429–449 (AVIITSSGTAVSNLLPAVVEA). The interval 981-1364 (FLHPMIKNVL…SEDVMMNTLG (384 aa)) is O-succinylbenzoate synthase. The Proton donor; for the o-succinylbenzoate synthase activity role is filled by K1170. The Mg(2+) site is built by D1202, E1228, and D1251. The active-site Proton acceptor; for the o-succinylbenzoate synthase activity is K1279. Residues 1418 to 1715 (HFIRVHDVGE…QKLLLALKEM (298 aa)) are 2-succinyl-6-hydroxy-2,4-cyclohexadiene-1-carboxylate synthase. In terms of domain architecture, AB hydrolase-1 spans 1435–1540 (LFLHGFLGTG…EGAVVVSGSP (106 aa)).

It in the N-terminal section; belongs to the isochorismate synthase family. In the 2nd section; belongs to the TPP enzyme family. MenD subfamily. This sequence in the 3rd section; belongs to the mandelate racemase/muconate lactonizing enzyme family. MenC type 1 subfamily. The protein in the C-terminal section; belongs to the AB hydrolase superfamily. MenH family. Mg(2+) serves as cofactor. Requires Mn(2+) as cofactor. Thiamine diphosphate is required as a cofactor.

It is found in the plastid. The protein resides in the chloroplast membrane. The enzyme catalyses isochorismate + 2-oxoglutarate + H(+) = 5-enolpyruvoyl-6-hydroxy-2-succinyl-cyclohex-3-ene-1-carboxylate + CO2. It carries out the reaction (1R,6R)-6-hydroxy-2-succinyl-cyclohexa-2,4-diene-1-carboxylate = 2-succinylbenzoate + H2O. It catalyses the reaction 5-enolpyruvoyl-6-hydroxy-2-succinyl-cyclohex-3-ene-1-carboxylate = (1R,6R)-6-hydroxy-2-succinyl-cyclohexa-2,4-diene-1-carboxylate + pyruvate. Functionally, multifunctional enzyme required for phylloquinone (vitamin K1) biosynthesis. The sequence is that of Protein PHYLLO, chloroplastic (PHYLLO) from Arabidopsis thaliana (Mouse-ear cress).